The primary structure comprises 150 residues: D-aminoacyl-tRNA deacylase (150 aa).

The short motif at G138–P139 is the Gly-cisPro motif, important for rejection of L-amino acids element.

It belongs to the DTD family. Homodimer.

The protein resides in the cytoplasm. It carries out the reaction glycyl-tRNA(Ala) + H2O = tRNA(Ala) + glycine + H(+). The catalysed reaction is a D-aminoacyl-tRNA + H2O = a tRNA + a D-alpha-amino acid + H(+). Its function is as follows. An aminoacyl-tRNA editing enzyme that deacylates mischarged D-aminoacyl-tRNAs. Also deacylates mischarged glycyl-tRNA(Ala), protecting cells against glycine mischarging by AlaRS. Acts via tRNA-based rather than protein-based catalysis; rejects L-amino acids rather than detecting D-amino acids in the active site. By recycling D-aminoacyl-tRNA to D-amino acids and free tRNA molecules, this enzyme counteracts the toxicity associated with the formation of D-aminoacyl-tRNA entities in vivo and helps enforce protein L-homochirality. This is D-aminoacyl-tRNA deacylase from Phocaeicola vulgatus (strain ATCC 8482 / DSM 1447 / JCM 5826 / CCUG 4940 / NBRC 14291 / NCTC 11154) (Bacteroides vulgatus).